The primary structure comprises 588 residues: Proteasome-associated ATPase (588 aa).

The segment covering 1–10 has biased composition (basic and acidic residues); the sequence is MAAHDDDMNR. Residues 1 to 23 form a disordered region; it reads MAAHDDDMNRGIRPGRGSDDPSG. Residues 47 to 94 are a coiled coil; the sequence is RILEERIVELQTNLAGVSAQNERLANTLREARDQIVALKEEVDRLAQP. 276 to 281 lines the ATP pocket; sequence GCGKTL. Residues 587–588 form a docks into pockets in the proteasome alpha-ring region; it reads YL.

The protein belongs to the AAA ATPase family. Homohexamer. Assembles into a hexameric ring structure that caps the 20S proteasome core. Strongly interacts with the prokaryotic ubiquitin-like protein Pup through a hydrophobic interface; the interacting region of ARC lies in its N-terminal coiled-coil domain. There is one Pup binding site per ARC hexamer ring. Upon ATP-binding, the C-terminus of ARC interacts with the alpha-rings of the proteasome core, possibly by binding to the intersubunit pockets.

The protein operates within protein degradation; proteasomal Pup-dependent pathway. In terms of biological role, ATPase which is responsible for recognizing, binding, unfolding and translocation of pupylated proteins into the bacterial 20S proteasome core particle. May be essential for opening the gate of the 20S proteasome via an interaction with its C-terminus, thereby allowing substrate entry and access to the site of proteolysis. Thus, the C-termini of the proteasomal ATPase may function like a 'key in a lock' to induce gate opening and therefore regulate proteolysis. The sequence is that of Proteasome-associated ATPase from Streptomyces scabiei (strain 87.22).